Here is a 321-residue protein sequence, read N- to C-terminus: MRQVDGVKLLGRLGDGVNELRGRLTPDAPMDRVTWFRAGGLAEVMFQPHDTDDLIAFLKILPEDVPLTVVGVGSNLLVRDGGIPGVVVRLSAKGFGSVELADENRIKAGAICPDKHIAAMAMDNGIGGFHFYYGIPGSIGGALRMNAGANGGETRERVVEVYAVDRQGNQHVLSNADMGYSYRHSGADAGLIFTGALFEGYPEDKAKIRADMDAVRHHRETVQPIREQTGGSTFKNPEGHSAWELIDEAGGRGLVIGGAQMSSLHCNFMINTGHATGYDLEYLGETIRRRVFEKSGIRLEWEIKRLGLFMPGREVEPFLGA.

In terms of domain architecture, FAD-binding PCMH-type spans 36–203; it reads FRAGGLAEVM…TGALFEGYPE (168 aa). The active site involves Arg183. Ser232 (proton donor) is an active-site residue. Residue Glu302 is part of the active site.

The protein belongs to the MurB family. The cofactor is FAD.

It is found in the cytoplasm. The catalysed reaction is UDP-N-acetyl-alpha-D-muramate + NADP(+) = UDP-N-acetyl-3-O-(1-carboxyvinyl)-alpha-D-glucosamine + NADPH + H(+). It functions in the pathway cell wall biogenesis; peptidoglycan biosynthesis. Cell wall formation. This Agrobacterium fabrum (strain C58 / ATCC 33970) (Agrobacterium tumefaciens (strain C58)) protein is UDP-N-acetylenolpyruvoylglucosamine reductase.